The primary structure comprises 192 residues: Adenine phosphoribosyltransferase (192 aa).

The protein belongs to the purine/pyrimidine phosphoribosyltransferase family. As to quaternary structure, homodimer.

The protein localises to the cytoplasm. The enzyme catalyses AMP + diphosphate = 5-phospho-alpha-D-ribose 1-diphosphate + adenine. Its pathway is purine metabolism; AMP biosynthesis via salvage pathway; AMP from adenine: step 1/1. Functionally, catalyzes a salvage reaction resulting in the formation of AMP, that is energically less costly than de novo synthesis. The chain is Adenine phosphoribosyltransferase from Corynebacterium efficiens (strain DSM 44549 / YS-314 / AJ 12310 / JCM 11189 / NBRC 100395).